Reading from the N-terminus, the 850-residue chain is MPDRRLSQLLKSKLLRRSSTTATTSPKQNQKPVNAQKKAAVGADPLVDPNSTSDLSCSLPPHLLTSNEGEGDAKSRAYSIISSIPLDHPSSPDEIPGPATGSSAGCEQYFTHFDRSGANSRQEGSQNGSIQQSPTFTRTLRHKQLTEEKDKGKLQSREGDQRGEYGYQRIRNDSNDSDPQYSLTTELANKPSTPQTPAGDDSLHSPSATPLPLSPSLPGPTGASSLQAAYRPVRENSSVPLVESQLTPSLGAVAEDSSGESAFHFVGPSSSSPFPKRPPLGFRRQSLLPASHQHLISGLLGFGPSQNLGQGSGHPSTVNADMIPRKVWVKRPGGSATLVPTMEDSLVDELRDQVIMKYANSLGRTFDSPDIMIRISPREGSNRQSTPERILSPEEPLGVVLDTYFPGGQTVDEALVIDIPQRRTPKPSPRHPVYYHHSEPGEHGEYFPLMPANPNAPTPPTHPSASSTSVNAHHTGPSISILTTDSNMASCPQPPVAAPQVPTPPGPPPESPQTKTHTPPARVASPRPRPTKPKKAGNGQSPNAAFGGLIEGTVPPINVLIVEDNIINQKLLEAFMKRLSVRWKCAANGEEAVRKWREGGFHLVLMDIQLPVMNGLDATKEIRRLERLNGIGVFTKTASGRSSASSLSPEVNQASSEVSLSEEDTLHDLSLFKSPVIIVALTASSLQSDRHEALAAGCNDFLTKPVGFPWLEQKVTEWGCMQALIDFEGWRKWRGFADEPQSSSPTDGGFTSPLQAGANGVSSRTSTSPSSAAVNATARAFATGPGAGKRKSTVPELTKPVDILPEEPPGSGSGEGNETLDSPASPLTSVHVGDPTEPPGDEEQQALDAT.

Disordered regions lie at residues 1–225 (MPDR…GASS) and 419–542 (IPQR…GQSP). A compositionally biased stretch (low complexity) spans 7–25 (SQLLKSKLLRRSSTTATTS). Polar residues predominate over residues 117–138 (GANSRQEGSQNGSIQQSPTFTR). The span at 144–163 (QLTEEKDKGKLQSREGDQRG) shows a compositional bias: basic and acidic residues. Over residues 177–196 (SDPQYSLTTELANKPSTPQT) the composition is skewed to polar residues. The span at 436–445 (HHSEPGEHGE) shows a compositional bias: basic and acidic residues. Residues 477–490 (PSISILTTDSNMAS) are compositionally biased toward polar residues. Pro residues predominate over residues 492–511 (PQPPVAAPQVPTPPGPPPES). Positions 558 to 719 (NVLIVEDNII…WLEQKVTEWG (162 aa)) constitute a Response regulatory domain. D607 carries the post-translational modification 4-aspartylphosphate. The segment at 736 to 850 (FADEPQSSSP…DEEQQALDAT (115 aa)) is disordered. Residues 762-782 (SSRTSTSPSSAAVNATARAFA) are compositionally biased toward low complexity. Polar residues predominate over residues 819 to 828 (TLDSPASPLT). Over residues 839–850 (PGDEEQQALDAT) the composition is skewed to acidic residues.

The protein belongs to the SSK1 family.

The protein localises to the cytoplasm. Final receptor of the osmolarity two-component system regulatory system, which controls activity of the sakA mitogen-activated protein kinase (MAPK) pathway in response to changes in the osmolarity of the extracellular environment. Regulates the germination in the airways that drives enhanced disease initiation and inflammation in the lungs. The protein is Response regulator sskA of Aspergillus fumigatus (strain ATCC MYA-4609 / CBS 101355 / FGSC A1100 / Af293) (Neosartorya fumigata).